The following is a 490-amino-acid chain: Katanin p60 ATPase-containing subunit A-like 1 (490 aa).

An N-acetylmethionine modification is found at methionine 1. The segment at 95–184 (DPAVWPPPVP…DGEMPKFDGA (90 aa)) is disordered. Residues 116 to 127 (PNREVRPLRKEM) show a composition bias toward basic and acidic residues. Positions 128–139 (AGVGARGPVGRA) are enriched in low complexity. The segment covering 143–169 (SKSEKPSTSRDKDYRARGRDDKGRKNM) has biased composition (basic and acidic residues). Phosphoserine is present on serine 174. An ATP-binding site is contributed by 248-255 (GPPGTGKT).

It belongs to the AAA ATPase family. Katanin p60 subunit A1 subfamily. A-like 1 sub-subfamily. In terms of assembly, interacts with KATNB1 and KATNBL1. Expressed in testis, restricted to Sertoli cells (at protein level).

Its subcellular location is the cytoplasm. It is found in the cytoskeleton. The protein localises to the spindle pole. It localises to the spindle. It carries out the reaction n ATP + n H2O + a microtubule = n ADP + n phosphate + (n+1) alpha/beta tubulin heterodimers.. Regulates microtubule dynamics in Sertoli cells, a process that is essential for spermiogenesis and male fertility. Severs microtubules in an ATP-dependent manner, promoting rapid reorganization of cellular microtubule arrays. Has microtubule-severing activity in vitro. This is Katanin p60 ATPase-containing subunit A-like 1 from Homo sapiens (Human).